The primary structure comprises 768 residues: MADRDKNDIRKRLEELRKDNNRRNNRQDNGNRSPFSGFLFFIFVILLFTFTLLFHRDIQTYFQEKREISYTEFVSKTQKGDFSEINEKDDKLISQVKENGKDVLYYTKKITDRVGDEPNIISAIGQKKVKLNSLQPSGGGFFLLLLGQFLPMIIMIGLMVYLAKKMVGGSQGGGPGNIFGFGKSRVNKIDKKPDVKFDDVAGVDGAKEELREVVDFLKNPEKYTKAGARVPKGVLLLGRPGTGKTLLAKAVAGESGASFFSISGSEFVEMFVGVGASRVRDLFEKAKESSPSIIFIDEIDAIGRRRSVGKNSGSNDEREQTLNQLLVEMDGFETDTKVIVLAATNREDVLDPALLRAGRFDRRVTVDAPDLQGRIAILKVHSRNKKLARDVKLEDIAKITPGFVGADLANLLNEAAILAARRASDTIKMADLDEAVDKIGMGLGQKGKIIKPEEKKLLAYHEAGHAIMTELTPGADPVHKVTIIPRGDAGGFMMPLPEEKLVTTSRQMLAEIKVLFGGRAAEEIGLEDVSTGAYSDIKRATKVARAYVESVGMSKKLGPINFENSDDEYSFTPNKSDETVREIDLEIRKILTEEYFNTLNTLQDNWEKLEQVVELLLKKETITGDEVRRIIAGEKAEDILKGTEVKEESIQKGSEGIVQTSENSIEESQENKTVEAEVHDSNLKSDTEKLAEAVREITGETGGVLEPTEKNDFDKDSDDNEKNDDDNENSDDSSKNDSDSDDENENSDNKSEKNKKRKSNFKLPSFME.

At 1–33 (MADRDKNDIRKRLEELRKDNNRRNNRQDNGNRS) the chain is on the cytoplasmic side. A helical membrane pass occupies residues 34–54 (PFSGFLFFIFVILLFTFTLLF). Residues 55-139 (HRDIQTYFQE…KLNSLQPSGG (85 aa)) are Periplasmic-facing. The helical transmembrane segment at 140-160 (GFFLLLLGQFLPMIIMIGLMV) threads the bilayer. The Cytoplasmic segment spans residues 161–768 (YLAKKMVGGS…SNFKLPSFME (608 aa)). 238 to 245 (GRPGTGKT) serves as a coordination point for ATP. Position 461 (His461) interacts with Zn(2+). The active site involves Glu462. Zn(2+)-binding residues include His465 and Asp536. Positions 647 to 768 (EESIQKGSEG…SNFKLPSFME (122 aa)) are disordered. Residues 669-698 (QENKTVEAEVHDSNLKSDTEKLAEAVREIT) show a composition bias toward basic and acidic residues. The span at 715 to 731 (KDSDDNEKNDDDNENSD) shows a compositional bias: acidic residues.

This sequence in the central section; belongs to the AAA ATPase family. The protein in the C-terminal section; belongs to the peptidase M41 family. In terms of assembly, homohexamer. Zn(2+) is required as a cofactor.

The protein resides in the cell inner membrane. In terms of biological role, acts as a processive, ATP-dependent zinc metallopeptidase for both cytoplasmic and membrane proteins. Plays a role in the quality control of integral membrane proteins. This Leptotrichia buccalis (strain ATCC 14201 / DSM 1135 / JCM 12969 / NCTC 10249 / C-1013-b) protein is ATP-dependent zinc metalloprotease FtsH.